Consider the following 176-residue polypeptide: Large ribosomal subunit protein uL6 (176 aa).

This sequence belongs to the universal ribosomal protein uL6 family. Part of the 50S ribosomal subunit.

In terms of biological role, this protein binds to the 23S rRNA, and is important in its secondary structure. It is located near the subunit interface in the base of the L7/L12 stalk, and near the tRNA binding site of the peptidyltransferase center. The protein is Large ribosomal subunit protein uL6 of Thiobacillus denitrificans (strain ATCC 25259 / T1).